We begin with the raw amino-acid sequence, 338 residues long: 1-aminocyclopropane-1-carboxylate deaminase (338 aa).

K51 bears the N6-(pyridoxal phosphate)lysine mark. S78 functions as the Nucleophile in the catalytic mechanism.

The protein belongs to the ACC deaminase/D-cysteine desulfhydrase family. In terms of assembly, homotrimer. Pyridoxal 5'-phosphate serves as cofactor.

It carries out the reaction 1-aminocyclopropane-1-carboxylate + H2O = 2-oxobutanoate + NH4(+). Functionally, catalyzes a cyclopropane ring-opening reaction, the irreversible conversion of 1-aminocyclopropane-1-carboxylate (ACC) to ammonia and alpha-ketobutyrate. Allows growth on ACC as a nitrogen source. This is 1-aminocyclopropane-1-carboxylate deaminase from Burkholderia multivorans (strain ATCC 17616 / 249).